We begin with the raw amino-acid sequence, 59 residues long: UPF0434 protein Shew_1640 (59 aa).

The protein belongs to the UPF0434 family.

This chain is UPF0434 protein Shew_1640, found in Shewanella loihica (strain ATCC BAA-1088 / PV-4).